The primary structure comprises 180 residues: NAD(P)H-quinone oxidoreductase subunit I, chloroplastic (180 aa).

2 consecutive 4Fe-4S ferredoxin-type domains span residues 55–84 (GRIH…VNWR) and 95–124 (LNYS…MTEE). Residues Cys64, Cys67, Cys70, Cys74, Cys104, Cys107, Cys110, and Cys114 each contribute to the [4Fe-4S] cluster site.

Belongs to the complex I 23 kDa subunit family. As to quaternary structure, NDH is composed of at least 16 different subunits, 5 of which are encoded in the nucleus. It depends on [4Fe-4S] cluster as a cofactor.

The protein localises to the plastid. The protein resides in the chloroplast thylakoid membrane. It catalyses the reaction a plastoquinone + NADH + (n+1) H(+)(in) = a plastoquinol + NAD(+) + n H(+)(out). The catalysed reaction is a plastoquinone + NADPH + (n+1) H(+)(in) = a plastoquinol + NADP(+) + n H(+)(out). NDH shuttles electrons from NAD(P)H:plastoquinone, via FMN and iron-sulfur (Fe-S) centers, to quinones in the photosynthetic chain and possibly in a chloroplast respiratory chain. The immediate electron acceptor for the enzyme in this species is believed to be plastoquinone. Couples the redox reaction to proton translocation, and thus conserves the redox energy in a proton gradient. The sequence is that of NAD(P)H-quinone oxidoreductase subunit I, chloroplastic from Platanus occidentalis (Sycamore).